We begin with the raw amino-acid sequence, 201 residues long: Dephospho-CoA kinase (201 aa).

The 199-residue stretch at 3–201 folds into the DPCK domain; sequence VIGLTGGIAS…WKERIEKNPR (199 aa). 11-16 contributes to the ATP binding site; sequence ASGKST.

It belongs to the CoaE family.

The protein resides in the cytoplasm. It catalyses the reaction 3'-dephospho-CoA + ATP = ADP + CoA + H(+). It functions in the pathway cofactor biosynthesis; coenzyme A biosynthesis; CoA from (R)-pantothenate: step 5/5. Its function is as follows. Catalyzes the phosphorylation of the 3'-hydroxyl group of dephosphocoenzyme A to form coenzyme A. This is Dephospho-CoA kinase from Geobacter metallireducens (strain ATCC 53774 / DSM 7210 / GS-15).